The primary structure comprises 492 residues: Ketol-acid reductoisomerase (NADP(+)) (492 aa).

One can recognise a KARI N-terminal Rossmann domain in the interval 15–208 (AQLGKCRFMA…GGHRAGVLES (194 aa)). NADP(+) is bound by residues 45–48 (CGAQ), Arg68, Arg76, Ser78, and 108–110 (DKQ). The active site involves His132. Gly158 lines the NADP(+) pocket. KARI C-terminal knotted domains lie at 209 to 344 (SFVA…NAPQ) and 345 to 485 (FEGK…MTDM). Mg(2+)-binding residues include Asp217, Glu221, Glu389, and Glu393. Residue Ser414 coordinates substrate.

Belongs to the ketol-acid reductoisomerase family. Requires Mg(2+) as cofactor.

The enzyme catalyses (2R)-2,3-dihydroxy-3-methylbutanoate + NADP(+) = (2S)-2-acetolactate + NADPH + H(+). The catalysed reaction is (2R,3R)-2,3-dihydroxy-3-methylpentanoate + NADP(+) = (S)-2-ethyl-2-hydroxy-3-oxobutanoate + NADPH + H(+). It participates in amino-acid biosynthesis; L-isoleucine biosynthesis; L-isoleucine from 2-oxobutanoate: step 2/4. It functions in the pathway amino-acid biosynthesis; L-valine biosynthesis; L-valine from pyruvate: step 2/4. Its function is as follows. Involved in the biosynthesis of branched-chain amino acids (BCAA). Catalyzes an alkyl-migration followed by a ketol-acid reduction of (S)-2-acetolactate (S2AL) to yield (R)-2,3-dihydroxy-isovalerate. In the isomerase reaction, S2AL is rearranged via a Mg-dependent methyl migration to produce 3-hydroxy-3-methyl-2-ketobutyrate (HMKB). In the reductase reaction, this 2-ketoacid undergoes a metal-dependent reduction by NADPH to yield (R)-2,3-dihydroxy-isovalerate. This Yersinia pseudotuberculosis serotype O:3 (strain YPIII) protein is Ketol-acid reductoisomerase (NADP(+)).